The following is a 361-amino-acid chain: Phospho-N-acetylmuramoyl-pentapeptide-transferase (361 aa).

10 helical membrane-spanning segments follow: residues 25 to 45 (RGIL…PAVI), 73 to 93 (TMGG…WGDL), 98 to 118 (VWLV…DDWI), 139 to 159 (IFGL…AAIT), 168 to 188 (IALP…IVGF), 200 to 220 (GLAI…AYAS), 237 to 257 (AGEL…FLWF), 264 to 284 (VFMG…IAVI), 289 to 309 (MVLV…IIQV), and 339 to 359 (VIVR…ATLK).

The protein belongs to the glycosyltransferase 4 family. MraY subfamily. Requires Mg(2+) as cofactor.

The protein localises to the cell inner membrane. The catalysed reaction is UDP-N-acetyl-alpha-D-muramoyl-L-alanyl-gamma-D-glutamyl-meso-2,6-diaminopimeloyl-D-alanyl-D-alanine + di-trans,octa-cis-undecaprenyl phosphate = di-trans,octa-cis-undecaprenyl diphospho-N-acetyl-alpha-D-muramoyl-L-alanyl-D-glutamyl-meso-2,6-diaminopimeloyl-D-alanyl-D-alanine + UMP. Its pathway is cell wall biogenesis; peptidoglycan biosynthesis. Functionally, catalyzes the initial step of the lipid cycle reactions in the biosynthesis of the cell wall peptidoglycan: transfers peptidoglycan precursor phospho-MurNAc-pentapeptide from UDP-MurNAc-pentapeptide onto the lipid carrier undecaprenyl phosphate, yielding undecaprenyl-pyrophosphoryl-MurNAc-pentapeptide, known as lipid I. The chain is Phospho-N-acetylmuramoyl-pentapeptide-transferase from Xanthomonas oryzae pv. oryzae (strain MAFF 311018).